We begin with the raw amino-acid sequence, 265 residues long: Phosphate import ATP-binding protein PstB (265 aa).

The ABC transporter domain occupies 18-260; the sequence is ISARDVQVFY…PEDPRTESYI (243 aa). 50 to 57 contributes to the ATP binding site; sequence GPSGCGKS.

This sequence belongs to the ABC transporter superfamily. Phosphate importer (TC 3.A.1.7) family. As to quaternary structure, the complex is composed of two ATP-binding proteins (PstB), two transmembrane proteins (PstC and PstA) and a solute-binding protein (PstS).

It is found in the cell inner membrane. It catalyses the reaction phosphate(out) + ATP + H2O = ADP + 2 phosphate(in) + H(+). Functionally, part of the ABC transporter complex PstSACB involved in phosphate import. Responsible for energy coupling to the transport system. This Roseobacter denitrificans (strain ATCC 33942 / OCh 114) (Erythrobacter sp. (strain OCh 114)) protein is Phosphate import ATP-binding protein PstB.